Reading from the N-terminus, the 1053-residue chain is Prestalk protein (1053 aa).

The N-terminal stretch at 1–18 (MNKIYLILILFTFVGIIL) is a signal peptide. An X-1 repeat occupies 38–60 (NKCTLDKCNNGCCSNTPININDN). The 41 X 24 AA tandem repeats, Cys-rich stretch occupies residues 38 to 1019 (NKCTLDKCNN…VHTPVDCNDN (982 aa)). An X-2 repeat occupies 61 to 84 (DECTVDTCNPKTGISHTPVNCDDG). The X-3 repeat unit spans residues 85 to 108 (NSCTADSCLCGKGCQHVPIACDDN). Residues 109–132 (NACTVDSCSNSTGCCHTPLSCDDN) form an A-1 repeat. One copy of the A-2 repeat lies at 133–156 (NPCTVDSCSNSTGCCHTPINVDDH). A B-1 repeat occupies 157–180 (NACTEDKCTQSGGVTHTPIACDDK). The A-3 repeat unit spans residues 181 to 204 (NACTVDSCSNSTGCCHTPLSCDDN). Residues 205–228 (NACTVDSCSNSTGCVHTPINVDDH) form an A-4 repeat. A B-2 repeat occupies 229-252 (NACTEDKCTQSGGVTHTPIACDDK). One copy of the A-5 repeat lies at 253 to 276 (NACTADSCSNSTGCCHTPITCDDN). The A-6 repeat unit spans residues 277-300 (NACTVDSCSNSTGCCHTPINVDDN). The stretch at 301 to 324 (NACTEDKCTQSGGVTHTPIACDDK) is one B-3 repeat. The stretch at 325–348 (NACTVDSCSNSTGCVHTPLACDDK) is one A-7 repeat. One copy of the A-8 repeat lies at 349–372 (NPCTVDSCSNSTGCCHTPINVDDN). A B-4 repeat occupies 373 to 396 (NACTEDKCTQSGGVTHTPINCDDN). An A-9 repeat occupies 397–420 (NKCTVDSCSNSTGCCHTPMSCDDN). The stretch at 421–444 (NPCTVDSCSNSTGCVHTPINVDDN) is one A-10 repeat. The stretch at 445 to 468 (NACTEDKCTQNGGVTHTPIACDDK) is one B-5 repeat. The A-11 repeat unit spans residues 469-492 (NACTVDSCSNSTGCCHTPLKCDDN). The A-12 repeat unit spans residues 493-516 (NACTVDSCSNSTGCVHTPINVDDN). One copy of the B-6 repeat lies at 517–540 (NACTEDKCTQSGGVTHTPISCDDK). One copy of the A-13 repeat lies at 541-564 (NPCTIDSCSNSTGCVHTPMSCDDR). The X-4 repeat unit spans residues 565 to 588 (NPCTSDFCSWEKGCQHVALSCNDF). Residues 589–612 (NACTMDSCSNSTGCTHTPIACDDK) form an A-14 repeat. The A-15 repeat unit spans residues 613–636 (NACTVDSCSNSTGCVHTPLTCDDN). One copy of the A-16 repeat lies at 637–660 (NPCTVDSCSNSTGCCHTPINVDDH). Residues 661-684 (NACTEDKCTQSGGVTHTPIACDDK) form a B-7 repeat. The A-17 repeat unit spans residues 685-708 (NACTVDSCSNSTGCCHTPLSCDDN). The A-18 repeat unit spans residues 709-732 (NACTVDSCSNSTGCVHTPINVDDN). One copy of the B-8 repeat lies at 733–756 (NACTEDKCTQNGGVTHTPIACDDK). One copy of the A-19 repeat lies at 757 to 780 (NACTVDSCSNSTGCCHTPLKCDDN). Residues 781-804 (NPCTVDSCSNSTGCVHTPMNVDDN) form an A-20 repeat. The stretch at 805 to 828 (NACTEDKCTQNGGVTHTPIRCDDL) is one B-9 repeat. The stretch at 829–852 (NSCTADSCSNSTGCVHTPINCDDN) is one A-21 repeat. Residues 853–876 (NKCTADSCSNSTGCCHTPISCDDN) form an A-22 repeat. The A-23 repeat unit spans residues 877-900 (NPCTVDSCSNSTGCCHTPINVDDN). The stretch at 901-924 (NPCTEDKCTQSGGVTHTPIGCNDN) is one B-10 repeat. The A-24 repeat unit spans residues 925–948 (NACTVDSCSNSTGCTHTPMKCDDN). The stretch at 949-971 (NPCTIDSCSNSTGCVHTPMNCDD) is one A-25 repeat. An A-26 repeat occupies 972-995 (GNFCTLDSCCSTGCTHTPIIIDDN). The A-27 repeat unit spans residues 996–1019 (NPCTVDSCCNSTGVVHTPVDCNDN).

The protein resides in the secreted. Its subcellular location is the extracellular space. The protein localises to the extracellular matrix. In terms of biological role, component of the stalk tube, the matrix that encases stalk cells. In Dictyostelium discoideum (Social amoeba), this protein is Prestalk protein (ecmB).